The sequence spans 333 residues: HTH-type transcriptional regulator Cphy_2742 (333 aa).

Residues Met-1–Leu-55 form the HTH lacI-type domain. The segment at residues Ile-3–Asn-22 is a DNA-binding region (H-T-H motif).

The protein resides in the cytoplasm. Involved in control of pectin and galacturonic acid metabolism. Probably represses a comprehensive set of pectin fermentation genes by binding a conserved palindrome at or downstream of their transcription start site to block transcription. In the presence of galacturonic acid may activate transcription of acetate synthesis and other aspects of carbon metabolism. The polypeptide is HTH-type transcriptional regulator Cphy_2742 (Lachnoclostridium phytofermentans (strain ATCC 700394 / DSM 18823 / ISDg) (Clostridium phytofermentans)).